A 62-amino-acid chain; its full sequence is Photosystem II reaction center protein Z (62 aa).

The next 2 helical transmembrane spans lie at 8–28 (LVLL…VVLA) and 41–61 (YTGA…NSLV).

This sequence belongs to the PsbZ family. PSII is composed of 1 copy each of membrane proteins PsbA, PsbB, PsbC, PsbD, PsbE, PsbF, PsbH, PsbI, PsbJ, PsbK, PsbL, PsbM, PsbT, PsbX, PsbY, PsbZ, Psb30/Ycf12, at least 3 peripheral proteins of the oxygen-evolving complex and a large number of cofactors. It forms dimeric complexes.

The protein resides in the plastid. The protein localises to the chloroplast thylakoid membrane. In terms of biological role, may control the interaction of photosystem II (PSII) cores with the light-harvesting antenna, regulates electron flow through the 2 photosystem reaction centers. PSII is a light-driven water plastoquinone oxidoreductase, using light energy to abstract electrons from H(2)O, generating a proton gradient subsequently used for ATP formation. The polypeptide is Photosystem II reaction center protein Z (Porphyra purpurea (Red seaweed)).